The sequence spans 499 residues: Glutamate--tRNA ligase (499 aa).

Residues 10-20 (PSPTGTPHVGM) carry the 'HIGH' region motif. The 'KMSKS' region motif lies at 255 to 259 (KLSKR). An ATP-binding site is contributed by Lys-258.

This sequence belongs to the class-I aminoacyl-tRNA synthetase family. Glutamate--tRNA ligase type 1 subfamily. As to quaternary structure, monomer.

It localises to the cytoplasm. It carries out the reaction tRNA(Glu) + L-glutamate + ATP = L-glutamyl-tRNA(Glu) + AMP + diphosphate. Its function is as follows. Catalyzes the attachment of glutamate to tRNA(Glu) in a two-step reaction: glutamate is first activated by ATP to form Glu-AMP and then transferred to the acceptor end of tRNA(Glu). This is Glutamate--tRNA ligase from Corynebacterium urealyticum (strain ATCC 43042 / DSM 7109).